The chain runs to 424 residues: Hemagglutinin-esterase (424 aa).

2 signal peptides span residues 1–16 (MFLL…IIGS) and 1–18 (MFLL…GSLG). An esterase domain 1 region spans residues 7–127 (FVLVSCIIGS…SNDIWMQNKG (121 aa)). Over 17-392 (LGFDNPPTNV…PICVYDPLPL (376 aa)) the chain is Virion surface. The active-site Nucleophile is Ser-40. An intrachain disulfide couples Cys-44 to Cys-65. N-linked (GlcNAc...) asparagine; by host glycans are attached at residues Asn-54, Asn-89, Asn-153, Asn-236, and Asn-301. 3 disulfides stabilise this stretch: Cys-113–Cys-162, Cys-197–Cys-276, and Cys-205–Cys-249. Positions 128–266 (LFYTQVYKNM…GNYLAISNEL (139 aa)) are receptor binding. The interval 267–379 (LLTVPTKAIC…RCPTAADINT (113 aa)) is esterase domain 2. An intrachain disulfide couples Cys-307 to Cys-312. The N-linked (GlcNAc...) asparagine; by host glycan is linked to Asn-316. Active-site charge relay system residues include Asp-326 and His-329. A disulfide bridge links Cys-347 with Cys-371. Residue Asn-358 is glycosylated (N-linked (GlcNAc...) asparagine; by host). A helical transmembrane segment spans residues 393–413 (ILLGILLGVAVIIIVVLLLYF). Residues 414–424 (MVDNGTRLHDA) are Intravirion-facing. Asn-417 is a glycosylation site (N-linked (GlcNAc...) asparagine; by host).

This sequence belongs to the influenza type C/coronaviruses hemagglutinin-esterase family. In terms of assembly, homodimer; disulfide-linked. Forms a complex with the M protein in the pre-Golgi. Associates then with S-M complex to form a ternary complex S-M-HE. Post-translationally, N-glycosylated in the host RER.

The protein localises to the virion membrane. The protein resides in the host cell membrane. The catalysed reaction is N-acetyl-9-O-acetylneuraminate + H2O = N-acetylneuraminate + acetate + H(+). The enzyme catalyses N-acetyl-4-O-acetylneuraminate + H2O = N-acetylneuraminate + acetate + H(+). Functionally, structural protein that makes short spikes at the surface of the virus. Contains receptor binding and receptor-destroying activities. Mediates de-O-acetylation of N-acetyl-4-O-acetylneuraminic acid, which is probably the receptor determinant recognized by the virus on the surface of erythrocytes and susceptible cells. This receptor-destroying activity is important for virus release as it probably helps preventing self-aggregation and ensures the efficient spread of the progeny virus from cell to cell. May serve as a secondary viral attachment protein for initiating infection, the spike protein being the major one. May become a target for both the humoral and the cellular branches of the immune system. The polypeptide is Hemagglutinin-esterase (Bos taurus (Bovine)).